Reading from the N-terminus, the 366-residue chain is Tyrosyl-DNA phosphodiesterase 2 (366 aa).

M1 is subject to N-acetylmethionine. The segment covering 1–22 (MASGSSSDAAESAEPAAAPAAA) has biased composition (low complexity). Residues 1 to 30 (MASGSSSDAAESAEPAAAPAAAETEEDQVK) are disordered. A Glycyl lysine isopeptide (Lys-Gly) (interchain with G-Cter in SUMO2) cross-link involves residue K30. T95 carries the phosphothreonine; by ACVR1B modification. Residues 126–130 (NIDGL) form an interaction with 5' end of substrate DNA region. Residues D128 and E158 each coordinate Mg(2+). An interaction with 5' end of substrate DNA region spans residues 232–237 (HLESTR). Catalysis depends on D268, which acts as the Proton donor/acceptor. Residues 270 to 272 (NLR) form an interaction with 5' end of substrate DNA region.

The protein belongs to the CCR4/nocturin family. Interacts with TRAF2, TRAF3, TRAF5, TRAF6, TNFRSF8/CD30, TNFRSF5/CD40, TNFRSF1B/TNF-R75, ETS1, ETS2, FLI1, SMAD3 and ACVR1B/ALK4. It depends on Mg(2+) as a cofactor. Mn(2+) serves as cofactor. Post-translationally, ubiquitinated by TRAF6.

The protein resides in the nucleus. It localises to the PML body. It is found in the nucleolus. Its subcellular location is the cytoplasm. In terms of biological role, DNA repair enzyme that can remove a variety of covalent adducts from DNA through hydrolysis of a 5'-phosphodiester bond, giving rise to DNA with a free 5' phosphate. Catalyzes the hydrolysis of dead-end complexes between DNA and the topoisomerase 2 (TOP2) active site tyrosine residue. The 5'-tyrosyl DNA phosphodiesterase activity can enable the repair of TOP2-induced DNA double-strand breaks/DSBs without the need for nuclease activity, creating a 'clean' DSB with 5'-phosphate termini that are ready for ligation. Thereby, protects the transcription of many genes involved in neurological development and maintenance from the abortive activity of TOP2. Hydrolyzes 5'-phosphoglycolates on protruding 5' ends on DSBs due to DNA damage by radiation and free radicals. Has preference for single-stranded DNA or duplex DNA with a 4 base pair overhang as substrate. Also has 3'-tyrosyl DNA phosphodiesterase activity, but less efficiently and much slower than TDP1. Constitutes the major if not only 5'-tyrosyl-DNA phosphodiesterase in cells. Also acts as an adapter by participating in the specific activation of MAP3K7/TAK1 in response to TGF-beta: associates with components of the TGF-beta receptor-TRAF6-TAK1 signaling module and promotes their ubiquitination dependent complex formation. Involved in non-canonical TGF-beta induced signaling routes. May also act as a negative regulator of ETS1 and may inhibit NF-kappa-B activation. Acts as a regulator of ribosome biogenesis following stress. This Rattus norvegicus (Rat) protein is Tyrosyl-DNA phosphodiesterase 2 (Tdp2).